Consider the following 739-residue polypeptide: Poly(A) polymerase gamma (739 aa).

An N6-acetyllysine modification is found at Lys2. Ser23 carries the phosphoserine modification. Residues 99–101 (FGS), Thr108, 112–114 (DID), Asp166, Lys227, Tyr236, and 245–246 (GV) each bind ATP. Residues Asp112, Asp114, and Asp166 each coordinate Mg(2+). Residues 506 to 566 (KSLSDVSRSS…PTGEIERSSA (61 aa)) are disordered. Polar residues-rich tracts occupy residues 509-531 (SDVSRSSGGLQSKRSSLDSTCLD) and 538-556 (SGTPFNSPVSANKPSNPDS). Ser524 carries the phosphoserine modification. 2 positions are modified to phosphoserine: Ser602 and Ser651. Position 657 is a phosphothreonine (Thr657). Residues 677–688 (SRAAEDRKRKPM) show a composition bias toward basic and acidic residues. The tract at residues 677–725 (SRAAEDRKRKPMDSIGGESMPIPTIDTARKKRLPSKELPDSSSPVPANN) is disordered. Ser711 carries the phosphoserine modification.

The protein belongs to the poly(A) polymerase family. Mg(2+) is required as a cofactor. It depends on Mn(2+) as a cofactor.

The protein resides in the nucleus. The catalysed reaction is RNA(n) + ATP = RNA(n)-3'-adenine ribonucleotide + diphosphate. Responsible for the post-transcriptional adenylation of the 3'-terminal of mRNA precursors and several small RNAs including signal recognition particle (SRP) RNA, nuclear 7SK RNA, U2 small nuclear RNA, and ribosomal 5S RNA. This is Poly(A) polymerase gamma (Papolg) from Mus musculus (Mouse).